A 194-amino-acid chain; its full sequence is MGVKNIERLIEERQKIEPINPAELTLEEKVVEIRRTTRVVEGGRRFSFSTLAVVGDRNGHVGFGHGKANEVPPSIAKAIADAKKHLIRVPLIEGTIPHDVIGKYESAVVLLKPARKGTGVVAGGPVRPVLELLGVTDILTKIIGRTTNPNNTVRAVFDALLQIRSPEQVAAIRGVDEEKIRKNYRIYASAPIVK.

An S5 DRBM domain is found at 26 to 89; the sequence is LEEKVVEIRR…ADAKKHLIRV (64 aa).

This sequence belongs to the universal ribosomal protein uS5 family. As to quaternary structure, part of the 30S ribosomal subunit. Contacts proteins S4 and S8.

Its function is as follows. With S4 and S12 plays an important role in translational accuracy. In terms of biological role, located at the back of the 30S subunit body where it stabilizes the conformation of the head with respect to the body. The chain is Small ribosomal subunit protein uS5 from Persephonella marina (strain DSM 14350 / EX-H1).